A 318-amino-acid polypeptide reads, in one-letter code: MLLGQKSQRYKAEEGLQAQGEAPGLMDVQIPTAEEQKAASSSSTLIMGTLEEVTDSGSPSPPQSPEGASSSLTVTDSTLWSQSDEGSSSNEEEGPSTSPDPAHLESLFREALDEKVAELVRFLLRKYQIKEPVTKAEMLESVIKNYKNHFPDIFSKASECMQVIFGIDVKEVDPAGHSYILVTCLGLSYDGLLGDDQSTPKTGLLIIVLGMILMEGSRAPEEAIWEALSVMGLYDGREHSVYWKLRKLLTQEWVQENYLEYRQAPGSDPVRYEFLWGPRALAETSYVKVLEHVVRVNARVRISYPSLHEEALGEEKGV.

The segment at 1–103 (MLLGQKSQRY…GPSTSPDPAH (103 aa)) is disordered. One can recognise an MAGE domain in the interval 112 to 311 (LDEKVAELVR…ISYPSLHEEA (200 aa)).

Expressed in many tumors of several types, such as melanoma, head and neck squamous cell carcinoma, lung carcinoma and breast carcinoma, but not in normal tissues except for testis and placenta.

Its function is as follows. Not known, though may play a role in embryonal development and tumor transformation or aspects of tumor progression. The protein is Melanoma-associated antigen 8 (MAGEA8) of Homo sapiens (Human).